The chain runs to 218 residues: Small ribosomal subunit protein uS3c (218 aa).

In terms of domain architecture, KH type-2 spans 47-117 (VRTHIRNSSN…KLKITLSEID (71 aa)).

This sequence belongs to the universal ribosomal protein uS3 family. In terms of assembly, part of the 30S ribosomal subunit.

It localises to the plastid. It is found in the chloroplast. The chain is Small ribosomal subunit protein uS3c (rps3) from Spirogyra maxima (Green alga).